Here is a 338-residue protein sequence, read N- to C-terminus: Phenylalanine--tRNA ligase alpha subunit (338 aa).

Glutamate 252 contacts Mg(2+).

The protein belongs to the class-II aminoacyl-tRNA synthetase family. Phe-tRNA synthetase alpha subunit type 1 subfamily. In terms of assembly, tetramer of two alpha and two beta subunits. It depends on Mg(2+) as a cofactor.

It localises to the cytoplasm. The enzyme catalyses tRNA(Phe) + L-phenylalanine + ATP = L-phenylalanyl-tRNA(Phe) + AMP + diphosphate + H(+). The protein is Phenylalanine--tRNA ligase alpha subunit of Pseudomonas syringae pv. syringae (strain B728a).